A 94-amino-acid chain; its full sequence is DNA gyrase subunit A (94 aa).

The 60-residue stretch at 35–94 folds into the Topo IIA-type catalytic domain; that stretch reads LPDVRDGLKPVHRRILYGLNEQGMTPDKPYKKSARIVGDVMGKYHPHGDSSIYEAMVRMA.

It belongs to the type II topoisomerase GyrA/ParC subunit family. Heterotetramer, composed of two GyrA and two GyrB chains. In the heterotetramer, GyrA contains the active site tyrosine that forms a transient covalent intermediate with DNA, while GyrB binds cofactors and catalyzes ATP hydrolysis.

It localises to the cytoplasm. It catalyses the reaction ATP-dependent breakage, passage and rejoining of double-stranded DNA.. A type II topoisomerase that negatively supercoils closed circular double-stranded (ds) DNA in an ATP-dependent manner to modulate DNA topology and maintain chromosomes in an underwound state. Negative supercoiling favors strand separation, and DNA replication, transcription, recombination and repair, all of which involve strand separation. Also able to catalyze the interconversion of other topological isomers of dsDNA rings, including catenanes and knotted rings. Type II topoisomerases break and join 2 DNA strands simultaneously in an ATP-dependent manner. The protein is DNA gyrase subunit A of Staphylococcus epidermidis.